The primary structure comprises 440 residues: Chromosome partition protein MukF (440 aa).

A leucine-zipper region spans residues 208–236 (LSETSGTLRELQDTLEAAGDKLQANLLRI).

It belongs to the MukF family. In terms of assembly, interacts, and probably forms a ternary complex, with MukE and MukB via its C-terminal region. The complex formation is stimulated by calcium or magnesium. It is required for an interaction between MukE and MukB.

It is found in the cytoplasm. The protein resides in the nucleoid. In terms of biological role, involved in chromosome condensation, segregation and cell cycle progression. May participate in facilitating chromosome segregation by condensation DNA from both sides of a centrally located replisome during cell division. Not required for mini-F plasmid partitioning. Probably acts via its interaction with MukB and MukE. Overexpression results in anucleate cells. It has a calcium binding activity. The protein is Chromosome partition protein MukF of Escherichia fergusonii (strain ATCC 35469 / DSM 13698 / CCUG 18766 / IAM 14443 / JCM 21226 / LMG 7866 / NBRC 102419 / NCTC 12128 / CDC 0568-73).